The primary structure comprises 113 residues: MAALGSPARTLRGLLRELRYLNAATGRPYRDTAAYRYLVKAFRAHRVTSEKLCRAQHELHFQAATYLCLLRSIRQHVALHQEFHGKGERSVEESAGLVGLQLPHQPGGKGWEP.

The disordered stretch occupies residues 94–113 (SAGLVGLQLPHQPGGKGWEP).

This sequence belongs to the FMC1 family. In terms of assembly, interacts with ATPAF2.

It localises to the mitochondrion. Plays a role in the assembly/stability of the mitochondrial membrane ATP synthase (F(1)F(0) ATP synthase or Complex V). In Rattus norvegicus (Rat), this protein is Protein FMC1 homolog.